A 269-amino-acid polypeptide reads, in one-letter code: 2-dehydro-3-deoxyphosphooctonate aldolase (269 aa).

This sequence belongs to the KdsA family.

It localises to the cytoplasm. It catalyses the reaction D-arabinose 5-phosphate + phosphoenolpyruvate + H2O = 3-deoxy-alpha-D-manno-2-octulosonate-8-phosphate + phosphate. It functions in the pathway carbohydrate biosynthesis; 3-deoxy-D-manno-octulosonate biosynthesis; 3-deoxy-D-manno-octulosonate from D-ribulose 5-phosphate: step 2/3. Its pathway is bacterial outer membrane biogenesis; lipopolysaccharide biosynthesis. In Chlamydia trachomatis serovar A (strain ATCC VR-571B / DSM 19440 / HAR-13), this protein is 2-dehydro-3-deoxyphosphooctonate aldolase.